The following is a 347-amino-acid chain: Tyrosine recombinase XerC 2 (347 aa).

The Core-binding (CB) domain occupies 17 to 108 (LVLTRYMEAH…PLKTWFKWLA (92 aa)). A Tyr recombinase domain is found at 125-313 (KLPKHLPRAI…SIEHLRAIHD (189 aa)). Residues arginine 170, lysine 195, histidine 265, arginine 268, and histidine 291 contribute to the active site. Tyrosine 300 functions as the O-(3'-phospho-DNA)-tyrosine intermediate in the catalytic mechanism.

It belongs to the 'phage' integrase family.

The protein resides in the cytoplasm. Its function is as follows. Site-specific tyrosine recombinase, which acts by catalyzing the cutting and rejoining of the recombining DNA molecules. In Ralstonia nicotianae (strain ATCC BAA-1114 / GMI1000) (Ralstonia solanacearum), this protein is Tyrosine recombinase XerC 2.